Consider the following 134-residue polypeptide: uncharacterized protein (134 aa).

3 helical membrane-spanning segments follow: residues 9–29 (PYFL…HGTA), 49–69 (MLLV…LGLF), and 107–127 (ALLY…ACAL).

It belongs to the DoxX family.

It localises to the cell membrane. This is an uncharacterized protein from Haemophilus influenzae (strain ATCC 51907 / DSM 11121 / KW20 / Rd).